Here is a 238-residue protein sequence, read N- to C-terminus: Female-specific protein 800 (238 aa).

Residues 35 to 50 (YSYHHTYNNNNQGNYQ) are compositionally biased toward low complexity. 2 disordered regions span residues 35-112 (YSYH…KGGS) and 166-204 (NKRK…SKSP). Over residues 97–106 (RNDQIQSRGN) the composition is skewed to polar residues. The span at 171-187 (TKSEKNGRYIKKDHMNN) shows a compositional bias: basic and acidic residues.

Functionally, FS800 is likely to have some function in the production or maintenance of the schistosome egg. The chain is Female-specific protein 800 from Schistosoma mansoni (Blood fluke).